A 319-amino-acid chain; its full sequence is Aliphatic sulfonates import ATP-binding protein SsuB 1 (319 aa).

The ABC transporter domain maps to 63 to 282; sequence VTLSGVSKRF…ARASAAFAAL (220 aa). 95–102 contacts ATP; the sequence is GRSGCGKS.

The protein belongs to the ABC transporter superfamily. Aliphatic sulfonates importer (TC 3.A.1.17.2) family. In terms of assembly, the complex is composed of two ATP-binding proteins (SsuB), two transmembrane proteins (SsuC) and a solute-binding protein (SsuA).

The protein localises to the cell inner membrane. The catalysed reaction is ATP + H2O + aliphatic sulfonate-[sulfonate-binding protein]Side 1 = ADP + phosphate + aliphatic sulfonateSide 2 + [sulfonate-binding protein]Side 1.. Functionally, part of the ABC transporter complex SsuABC involved in aliphatic sulfonates import. Responsible for energy coupling to the transport system. The polypeptide is Aliphatic sulfonates import ATP-binding protein SsuB 1 (Burkholderia cenocepacia (strain HI2424)).